The chain runs to 217 residues: MSEPLGLFGGTFDPVHFGHLRLAEESIAHLGLGGVRWIPAGQPPHRGVPQVTAQQRLEMVRLAMANNARFSLDPSEVEAEAPSYTVHTLERLRRELGPLQSLVLLVGADAFAGLATWHRWRDIFALAHVAVSHRPGFPVEISSLPHELASEFTDRRRADVRGLKASPAGGIVTFAMTQLAISATQIRKLLANELSARYLLPDSVLDYIQTHSLYRNS.

Belongs to the NadD family.

The enzyme catalyses nicotinate beta-D-ribonucleotide + ATP + H(+) = deamido-NAD(+) + diphosphate. Its pathway is cofactor biosynthesis; NAD(+) biosynthesis; deamido-NAD(+) from nicotinate D-ribonucleotide: step 1/1. Functionally, catalyzes the reversible adenylation of nicotinate mononucleotide (NaMN) to nicotinic acid adenine dinucleotide (NaAD). This chain is Probable nicotinate-nucleotide adenylyltransferase, found in Dechloromonas aromatica (strain RCB).